The following is a 66-amino-acid chain: Moricin-1 (66 aa).

A signal peptide spans 1-24 (MNILKFFFVFIVAMSLVSCSTAAP).

In terms of tissue distribution, expressed in fat body and to a lesser extent in hemocyte and Malpighian tubules.

It is found in the secreted. Functionally, has antibacterial activity against Gram-positive and Gram-negative bacteria. Probably acts by disturbing membrane functions with its amphipathic structure. The protein is Moricin-1 (MOR1) of Bombyx mori (Silk moth).